The following is a 253-amino-acid chain: 2-C-methyl-D-erythritol 4-phosphate cytidylyltransferase (253 aa).

Positions 1–28 (MSVSSRPGRRRFALIPSAGTGTRAGGDL) are disordered.

The protein belongs to the IspD/TarI cytidylyltransferase family. IspD subfamily.

The enzyme catalyses 2-C-methyl-D-erythritol 4-phosphate + CTP + H(+) = 4-CDP-2-C-methyl-D-erythritol + diphosphate. It functions in the pathway isoprenoid biosynthesis; isopentenyl diphosphate biosynthesis via DXP pathway; isopentenyl diphosphate from 1-deoxy-D-xylulose 5-phosphate: step 2/6. In terms of biological role, catalyzes the formation of 4-diphosphocytidyl-2-C-methyl-D-erythritol from CTP and 2-C-methyl-D-erythritol 4-phosphate (MEP). In Ralstonia nicotianae (strain ATCC BAA-1114 / GMI1000) (Ralstonia solanacearum), this protein is 2-C-methyl-D-erythritol 4-phosphate cytidylyltransferase.